A 240-amino-acid polypeptide reads, in one-letter code: CRISPR system aCascade subunit Cas5 1 (240 aa).

Belongs to the CRISPR-associated protein Cas5 family. Subtype I-A/Apern subfamily. Part of the aCascade ribonucleoprotein complex, minimally composed of Csa2 and Cas5a, which binds crRNA. Other possible components of aCascade in strain P1 are Cas6b (SSO1437) and Csa5 (SSO1443), while SSO1399, Cas5b (SSO1400) and SSO1401 have sometimes been seen weakly associated. Csa2 is probably the major RNA-binding subunit. The Csa2-Cas5a-crRNA complex also binds target DNA homologous to crRNA, probably forming an R-loop. Purified aCascade forms a filament about 6 nm in width.

CRISPR (clustered regularly interspaced short palindromic repeat) is an adaptive immune system that provides protection against mobile genetic elements (viruses, transposable elements and conjugative plasmids). CRISPR clusters contain spacers, sequences complementary to antecedent mobile elements, and target invading nucleic acids. CRISPR clusters are transcribed and processed into CRISPR RNA (crRNA). This chain is CRISPR system aCascade subunit Cas5 1 (cas5a), found in Saccharolobus solfataricus (strain ATCC 35092 / DSM 1617 / JCM 11322 / P2) (Sulfolobus solfataricus).